The following is a 256-amino-acid chain: MRIQRSLGIVLYNKNYREDDKLVKIFTEAAGKRMFFVKHIGRSKLAPVVQPLTAADFLLKINDSSLSYIEDYNQVEAYRHINEDFFRLSYASYVLALADAAIPDNEPDPQLFAFLKKTLDLIEEGLDYDILTNIFEIQILDRFGVRMNFHDCVFCHSTNLPFDFSHKYSGVLCPQHYHEDEGRYGLDPNVIYLINRFQTINIDELKTISVNADMKKKLRLFIDALYEDYVGIRLKSKVFIDDLAKWGDIMKNKQGL.

It belongs to the RecO family.

Involved in DNA repair and RecF pathway recombination. The chain is DNA repair protein RecO from Streptococcus equi subsp. zooepidemicus (strain MGCS10565).